A 444-amino-acid chain; its full sequence is Gentisate transporter (444 aa).

12 helical membrane passes run 42–64 (AAVLIGWFFVIFDGYDLIVYGTV), 79–101 (LGTIGSTAFFGMAIGAVFIGRLS), 108–127 (AAVIGSVLILSVFTMLCAFA), 131–153 (WVFGAFRFIAGLGLGGLVPSVNA), 166–188 (AWATVMMSGVPIGGSIAAVLALV), 198–220 (WRFMFLIALIPLVVGLPIAMKVI), 252–274 (WISIWFALATFVTLLAWYGLGTW), 289–311 (ALMFTLALNLGAVIGSVVTAWAG), 318–340 (RSGVIAAGIAGIALLLLLTYPPV), 344–366 (YVILILAGVGTHGTQILIIAAVA), 378–400 (LGWALGVGRIGAVVAPQLAGLLL), and 410–428 (FIMFGTAALLSALALSVLL).

It belongs to the major facilitator superfamily. Aromatic acid:H(+) symporter (AAHS) (TC 2.A.1.15) family.

The protein localises to the cell membrane. Its function is as follows. Transport of gentisate (2,5-dihydroxybenzoate) into the cell. Does not transport 3-hydroxybenzoate or benzoate. The polypeptide is Gentisate transporter (genK) (Corynebacterium glutamicum (strain ATCC 13032 / DSM 20300 / JCM 1318 / BCRC 11384 / CCUG 27702 / LMG 3730 / NBRC 12168 / NCIMB 10025 / NRRL B-2784 / 534)).